Reading from the N-terminus, the 257-residue chain is Hydroxyacylglutathione hydrolase (257 aa).

His-54, His-56, Asp-58, His-59, His-113, Asp-137, and His-175 together coordinate Zn(2+).

This sequence belongs to the metallo-beta-lactamase superfamily. Glyoxalase II family. Monomer. Requires Zn(2+) as cofactor.

The catalysed reaction is an S-(2-hydroxyacyl)glutathione + H2O = a 2-hydroxy carboxylate + glutathione + H(+). It functions in the pathway secondary metabolite metabolism; methylglyoxal degradation; (R)-lactate from methylglyoxal: step 2/2. Functionally, thiolesterase that catalyzes the hydrolysis of S-D-lactoyl-glutathione to form glutathione and D-lactic acid. The protein is Hydroxyacylglutathione hydrolase of Nostoc punctiforme (strain ATCC 29133 / PCC 73102).